Here is a 75-residue protein sequence, read N- to C-terminus: UPF0270 protein PP_1747 (75 aa).

The protein belongs to the UPF0270 family.

In Pseudomonas putida (strain ATCC 47054 / DSM 6125 / CFBP 8728 / NCIMB 11950 / KT2440), this protein is UPF0270 protein PP_1747.